Consider the following 324-residue polypeptide: MSVEDSIISIDSLQDQGINAGDINKLKSAGICSITSVLSTTRRNLTKIKGLSEIKVEKIKEAAGKIKKYGFLPATIVAESRTKVFHITTGSKQFDEILGGGIQSMSITEVFGEFRCGKTQLCHTLCVAAQLPTDMGGGEGRVAYIDTEGTFRPDRIRSIAERYGVDADICLENISYARALNSEHQIELVEQLGNELAEGTFRLLIVDSIMACFRVDYSGRGELNERQQKLNQHLSNLTRVAEDYNIAVFLTNQVQSDPGASALFAAADGRKPVGGHVLAHASATRILLRKGRGEERVAKLQDSPNMPEKECVYVIGEGGIKDTD.

112–119 serves as a coordination point for ATP; it reads GEFRCGKT. Residue R214 participates in dsDNA binding. SsDNA is bound by residues R214, Y217, R220, R226, and R296. 2 residues coordinate dsDNA: R220 and R226.

The protein belongs to the RecA family. DMC1 subfamily. As to quaternary structure, double stacked ring-shaped homooctamer.

It localises to the nucleus. Functionally, required for meiotic recombination, synaptonemal complex formation and cell cycle progression. The polypeptide is Meiotic recombination protein DLH1 (DLH1) (Candida albicans (Yeast)).